Here is a 255-residue protein sequence, read N- to C-terminus: tRNA (guanine-N(1)-)-methyltransferase (255 aa).

S-adenosyl-L-methionine contacts are provided by residues glycine 113 and 133–138 (IGDYVL).

The protein belongs to the RNA methyltransferase TrmD family. As to quaternary structure, homodimer.

The protein resides in the cytoplasm. The catalysed reaction is guanosine(37) in tRNA + S-adenosyl-L-methionine = N(1)-methylguanosine(37) in tRNA + S-adenosyl-L-homocysteine + H(+). Functionally, specifically methylates guanosine-37 in various tRNAs. In Serratia proteamaculans (strain 568), this protein is tRNA (guanine-N(1)-)-methyltransferase.